Consider the following 255-residue polypeptide: Thiazole synthase (255 aa).

The active-site Schiff-base intermediate with DXP is Lys96. 1-deoxy-D-xylulose 5-phosphate-binding positions include Gly157, 183–184 (AG), and 205–206 (NT).

It belongs to the ThiG family. Homotetramer. Forms heterodimers with either ThiH or ThiS.

Its subcellular location is the cytoplasm. It catalyses the reaction [ThiS sulfur-carrier protein]-C-terminal-Gly-aminoethanethioate + 2-iminoacetate + 1-deoxy-D-xylulose 5-phosphate = [ThiS sulfur-carrier protein]-C-terminal Gly-Gly + 2-[(2R,5Z)-2-carboxy-4-methylthiazol-5(2H)-ylidene]ethyl phosphate + 2 H2O + H(+). Its pathway is cofactor biosynthesis; thiamine diphosphate biosynthesis. Catalyzes the rearrangement of 1-deoxy-D-xylulose 5-phosphate (DXP) to produce the thiazole phosphate moiety of thiamine. Sulfur is provided by the thiocarboxylate moiety of the carrier protein ThiS. In vitro, sulfur can be provided by H(2)S. This Staphylococcus epidermidis (strain ATCC 12228 / FDA PCI 1200) protein is Thiazole synthase.